The sequence spans 511 residues: ATP synthase subunit alpha 1 (511 aa).

Position 174–181 (Gly-174–Thr-181) interacts with ATP.

This sequence belongs to the ATPase alpha/beta chains family. As to quaternary structure, F-type ATPases have 2 components, CF(1) - the catalytic core - and CF(0) - the membrane proton channel. CF(1) has five subunits: alpha(3), beta(3), gamma(1), delta(1), epsilon(1). CF(0) has four main subunits: a(1), b(1), b'(1) and c(9-12).

It is found in the cell inner membrane. It catalyses the reaction ATP + H2O + 4 H(+)(in) = ADP + phosphate + 5 H(+)(out). Produces ATP from ADP in the presence of a proton gradient across the membrane. The alpha chain is a regulatory subunit. The protein is ATP synthase subunit alpha 1 of Chlorobium luteolum (strain DSM 273 / BCRC 81028 / 2530) (Pelodictyon luteolum).